Here is a 450-residue protein sequence, read N- to C-terminus: mRNA cleavage and polyadenylation factor CLP1 (450 aa).

Residues E29, K67, and 137–142 (NSGKTS) contribute to the ATP site.

This sequence belongs to the Clp1 family. Clp1 subfamily. Component of a pre-mRNA cleavage factor complex. Interacts directly with PCF11.

The protein localises to the nucleus. Required for endonucleolytic cleavage during polyadenylation-dependent pre-mRNA 3'-end formation. The sequence is that of mRNA cleavage and polyadenylation factor CLP1 from Yarrowia lipolytica (strain CLIB 122 / E 150) (Yeast).